We begin with the raw amino-acid sequence, 260 residues long: Imidazole glycerol phosphate synthase subunit HisF (260 aa).

Residues Asp11 and Asp130 contribute to the active site.

The protein belongs to the HisA/HisF family. As to quaternary structure, heterodimer of HisH and HisF.

It is found in the cytoplasm. It catalyses the reaction 5-[(5-phospho-1-deoxy-D-ribulos-1-ylimino)methylamino]-1-(5-phospho-beta-D-ribosyl)imidazole-4-carboxamide + L-glutamine = D-erythro-1-(imidazol-4-yl)glycerol 3-phosphate + 5-amino-1-(5-phospho-beta-D-ribosyl)imidazole-4-carboxamide + L-glutamate + H(+). Its pathway is amino-acid biosynthesis; L-histidine biosynthesis; L-histidine from 5-phospho-alpha-D-ribose 1-diphosphate: step 5/9. IGPS catalyzes the conversion of PRFAR and glutamine to IGP, AICAR and glutamate. The HisF subunit catalyzes the cyclization activity that produces IGP and AICAR from PRFAR using the ammonia provided by the HisH subunit. This chain is Imidazole glycerol phosphate synthase subunit HisF, found in Psychrobacter arcticus (strain DSM 17307 / VKM B-2377 / 273-4).